The primary structure comprises 343 residues: Lipopolysaccharide core biosynthesis glycosyltransferase LpsD (343 aa).

Belongs to the glycosyltransferase group 1 family. Glycosyltransferase 4 subfamily.

It participates in bacterial outer membrane biogenesis; LPS core biosynthesis. The polypeptide is Lipopolysaccharide core biosynthesis glycosyltransferase LpsD (lpsD) (Rhizobium meliloti (strain 1021) (Ensifer meliloti)).